We begin with the raw amino-acid sequence, 198 residues long: Large ribosomal subunit protein uL13 (198 aa).

It belongs to the universal ribosomal protein uL13 family.

This is Large ribosomal subunit protein uL13 (RPL13A) from Tetrahymena thermophila (strain SB210).